We begin with the raw amino-acid sequence, 350 residues long: Phospho-N-acetylmuramoyl-pentapeptide-transferase (350 aa).

9 helical membrane-spanning segments follow: residues 28–48, 70–90, 100–120, 136–156, 164–184, 195–215, 221–241, 249–269, and 328–348; these read LPLL…IPLL, GTPT…GSLI, LLSL…DDWS, LLLQ…QGWI, FGLE…VVLA, LDGL…LQLM, GDPA…GFLV, AFMG…VALL, and QSVV…GLVL.

This sequence belongs to the glycosyltransferase 4 family. MraY subfamily. The cofactor is Mg(2+).

The protein localises to the cell inner membrane. It carries out the reaction UDP-N-acetyl-alpha-D-muramoyl-L-alanyl-gamma-D-glutamyl-meso-2,6-diaminopimeloyl-D-alanyl-D-alanine + di-trans,octa-cis-undecaprenyl phosphate = di-trans,octa-cis-undecaprenyl diphospho-N-acetyl-alpha-D-muramoyl-L-alanyl-D-glutamyl-meso-2,6-diaminopimeloyl-D-alanyl-D-alanine + UMP. It participates in cell wall biogenesis; peptidoglycan biosynthesis. Catalyzes the initial step of the lipid cycle reactions in the biosynthesis of the cell wall peptidoglycan: transfers peptidoglycan precursor phospho-MurNAc-pentapeptide from UDP-MurNAc-pentapeptide onto the lipid carrier undecaprenyl phosphate, yielding undecaprenyl-pyrophosphoryl-MurNAc-pentapeptide, known as lipid I. The polypeptide is Phospho-N-acetylmuramoyl-pentapeptide-transferase (Synechococcus sp. (strain CC9605)).